The following is a 430-amino-acid chain: 3-phosphoshikimate 1-carboxyvinyltransferase (430 aa).

The disordered stretch occupies residues 1 to 20 (MHATVSPSRVRGRARAPPSK). The 3-phosphoshikimate site is built by lysine 20, serine 21, and arginine 25. Lysine 20 is a phosphoenolpyruvate binding site. Residues glycine 91 and arginine 119 each contribute to the phosphoenolpyruvate site. The 3-phosphoshikimate site is built by serine 164, serine 165, glutamine 166, serine 192, aspartate 312, and lysine 339. Glutamine 166 is a phosphoenolpyruvate binding site. The active-site Proton acceptor is aspartate 312. Residues arginine 343 and arginine 386 each coordinate phosphoenolpyruvate.

It belongs to the EPSP synthase family. As to quaternary structure, monomer.

Its subcellular location is the cytoplasm. The enzyme catalyses 3-phosphoshikimate + phosphoenolpyruvate = 5-O-(1-carboxyvinyl)-3-phosphoshikimate + phosphate. The protein operates within metabolic intermediate biosynthesis; chorismate biosynthesis. Its function is as follows. Catalyzes the transfer of the enolpyruvyl moiety of phosphoenolpyruvate (PEP) to the 5-hydroxyl of shikimate-3-phosphate (S3P) to produce enolpyruvyl shikimate-3-phosphate and inorganic phosphate. This Halobacterium salinarum (strain ATCC 29341 / DSM 671 / R1) protein is 3-phosphoshikimate 1-carboxyvinyltransferase.